The following is a 119-amino-acid chain: UPF0102 protein PM0647 (119 aa).

It belongs to the UPF0102 family.

The protein is UPF0102 protein PM0647 of Pasteurella multocida (strain Pm70).